A 257-amino-acid chain; its full sequence is Imidazole glycerol phosphate synthase subunit HisF (257 aa).

Active-site residues include aspartate 12 and aspartate 131.

It belongs to the HisA/HisF family. In terms of assembly, heterodimer of HisH and HisF.

Its subcellular location is the cytoplasm. It carries out the reaction 5-[(5-phospho-1-deoxy-D-ribulos-1-ylimino)methylamino]-1-(5-phospho-beta-D-ribosyl)imidazole-4-carboxamide + L-glutamine = D-erythro-1-(imidazol-4-yl)glycerol 3-phosphate + 5-amino-1-(5-phospho-beta-D-ribosyl)imidazole-4-carboxamide + L-glutamate + H(+). It functions in the pathway amino-acid biosynthesis; L-histidine biosynthesis; L-histidine from 5-phospho-alpha-D-ribose 1-diphosphate: step 5/9. In terms of biological role, IGPS catalyzes the conversion of PRFAR and glutamine to IGP, AICAR and glutamate. The HisF subunit catalyzes the cyclization activity that produces IGP and AICAR from PRFAR using the ammonia provided by the HisH subunit. The sequence is that of Imidazole glycerol phosphate synthase subunit HisF from Marinomonas sp. (strain MWYL1).